Reading from the N-terminus, the 338-residue chain is Lipoate-protein ligase A (338 aa).

The BPL/LPL catalytic domain occupies 29–216; it reads PATQRVLFLW…AFFAHYGERV (188 aa). Residues Arg-71, 76–79, and Lys-134 each bind ATP; that span reads GAVF. Lys-134 contributes to the (R)-lipoate binding site.

Belongs to the LplA family. Monomer.

The protein resides in the cytoplasm. It catalyses the reaction L-lysyl-[lipoyl-carrier protein] + (R)-lipoate + ATP = N(6)-[(R)-lipoyl]-L-lysyl-[lipoyl-carrier protein] + AMP + diphosphate + H(+). The protein operates within protein modification; protein lipoylation via exogenous pathway; protein N(6)-(lipoyl)lysine from lipoate: step 1/2. Its pathway is protein modification; protein lipoylation via exogenous pathway; protein N(6)-(lipoyl)lysine from lipoate: step 2/2. Functionally, catalyzes both the ATP-dependent activation of exogenously supplied lipoate to lipoyl-AMP and the transfer of the activated lipoyl onto the lipoyl domains of lipoate-dependent enzymes. This Escherichia coli (strain K12 / MC4100 / BW2952) protein is Lipoate-protein ligase A.